Here is a 614-residue protein sequence, read N- to C-terminus: GPI transamidase component GAA1 (614 aa).

Residues 1-19 are Cytoplasmic-facing; the sequence is MALLEKLHRRIVDMGLVPR. The chain crosses the membrane as a helical span at residues 20–40; that stretch reads IIALLPVISMLCALFGFISIA. Residues 41–356 lie on the Lumenal side of the membrane; that stretch reads ILPMDGQYRR…APRQFVSISS (316 aa). Asparagine 87 is a glycosylation site (N-linked (GlcNAc...) asparagine). The chain crosses the membrane as a helical span at residues 357–377; it reads YLPSAVALSIAFAISSLNAFI. Residues 378-394 are Cytoplasmic-facing; it reads NNAYANISLFSEYNLVA. The helical transmembrane segment at 395 to 415 threads the bilayer; that stretch reads LLVWFVSLVISFVVSQAFLLI. At 416-464 the chain is on the lumenal side; that stretch reads PSSGLLMTISMASCFLPLILSRKIHISEPLSYRLKNVAFLYFSLVSTSL. A helical transmembrane segment spans residues 465 to 485; the sequence is LMINFAMALLIGTLAFPMTFV. At 486-535 the chain is on the cytoplasmic side; sequence KTIVESSSEHEVTTQSSNPIKTEPKDEIELVENHMDTTPATPQQQKQKLK. A helical membrane pass occupies residues 536–556; the sequence is NLVLLILTNPFISITLFGLFF. At 557–577 the chain is on the lumenal side; that stretch reads DDEFHGFDIINKLVSAWLDLK. The chain crosses the membrane as a helical span at residues 578–598; that stretch reads CWSWFVLCIGWLPCWLLILAS. Residues 599 to 614 lie on the Cytoplasmic side of the membrane; that stretch reads SFESKSVVVRSKEKQS. The Prevents secretion from ER signature appears at 610–614; the sequence is KEKQS.

In terms of assembly, forms a complex with CDC91, GPI17, GPI16 and GPI8.

The protein localises to the endoplasmic reticulum membrane. The protein operates within glycolipid biosynthesis; glycosylphosphatidylinositol-anchor biosynthesis. In terms of biological role, component of the GPI transamidase complex. Required for a terminal step of GPI anchor attachment onto proteins. Affects endocytosis. The sequence is that of GPI transamidase component GAA1 (GAA1) from Saccharomyces cerevisiae (strain ATCC 204508 / S288c) (Baker's yeast).